The following is a 403-amino-acid chain: MSSYLFTSESVSEGHPDKIADQISDAVLDAILAQDKRARVACETMVKTGVAIVAGEVTTSAWIDLEALTRKVILDIGYNSSDVGFDGETCGVLNLIGKQSPDINQGVDRKNPEQQGAGDQGLMFGYATNETDSFMPAAIHLSHRLVEQQAKIRKKKNSALSWLRPDAKSQVTLRYEDGVATAIDAVVLSTQHDPGVKQKDLIEAVREEILKPVLPAKWLHKGTKFHINPTGKFVIGGPVGDCGLTGRKIIVDTYGGWARHGGGAFSGKDPSKVDRSAAYAARYVAKNVVAAGLADRCEVQVSYAIGVAEPTSISVTTFGTGKIADEQIEKLIRKHFDLRPFGIIQMLDLIHPMYQQTASYGHFGRKPKDFTYTDGTGAQHSATSFSWEKTDRADALRAAAKLK.

Histidine 15 contributes to the ATP binding site. Residue aspartate 17 participates in Mg(2+) binding. Glutamate 43 lines the K(+) pocket. Residues glutamate 56 and glutamine 99 each contribute to the L-methionine site. Residues 99 to 109 (QSPDINQGVDR) form a flexible loop region. ATP contacts are provided by residues 166–168 (DAK), 232–233 (KF), aspartate 241, 247–248 (RK), alanine 264, and lysine 268. Aspartate 241 serves as a coordination point for L-methionine. Lysine 272 contributes to the L-methionine binding site.

This sequence belongs to the AdoMet synthase family. As to quaternary structure, homotetramer; dimer of dimers. It depends on Mg(2+) as a cofactor. Requires K(+) as cofactor.

Its subcellular location is the cytoplasm. The enzyme catalyses L-methionine + ATP + H2O = S-adenosyl-L-methionine + phosphate + diphosphate. It participates in amino-acid biosynthesis; S-adenosyl-L-methionine biosynthesis; S-adenosyl-L-methionine from L-methionine: step 1/1. Its function is as follows. Catalyzes the formation of S-adenosylmethionine (AdoMet) from methionine and ATP. The overall synthetic reaction is composed of two sequential steps, AdoMet formation and the subsequent tripolyphosphate hydrolysis which occurs prior to release of AdoMet from the enzyme. In Xanthomonas axonopodis pv. citri (strain 306), this protein is S-adenosylmethionine synthase.